Consider the following 1013-residue polypeptide: Nucleotide-binding oligomerization domain-containing protein 2 (1013 aa).

2 CARD domains span residues 1 to 82 (MCSQ…AVQE) and 107 to 178 (LQSH…HVQK). The ATG16L1-binding motif signature appears at 36-50 (WEVLSWEDYEGLRLV). Thr-212, Tyr-225, Thr-226, Gly-275, Ser-276, Gly-277, Lys-278, Ser-279, and Thr-280 together coordinate ADP. The required for CARD9 binding stretch occupies residues 214-247 (DGAENLCLEDIYTENTLEVRTEVGMAGPLHKSPA). The region spanning 266-402 (DTVLVVGEAG…RKVLTSRPDA (137 aa)) is the NACHT domain. 272–279 (GEAGSGKS) lines the ATP pocket. Cys-368 is lipidated: S-palmitoyl cysteine. Residue His-576 coordinates ADP. LRR repeat units lie at residues 764-785 (RPVA…QLLP), 789-812 (ACKA…IEHA), 817-838 (QLQK…SVAQ), 845-857 (NFLA…NHIT), 873-893 (SLQF…QALA), 901-922 (SLKW…ALAS), 929-949 (ALEE…CSLA), 957-978 (SLKV…ALLQ), and 985-1005 (TILE…EALS).

The protein belongs to the NOD1-NOD2 family. As to quaternary structure, homooligomer: homooligomerizes following muramyl dipeptide (MDP)-binding, promoting RIPK2 recruitment. Interacts (via CARD domain) with RIPK2 (via CARD domain). Following RIPK2 recruitment, RIPK2 homooligomerizes via its CARD domain and forms long filaments named RIPosomes. Interacts (via CARD domain) with ubiquitin; inhibiting interaction with RIPK2. Component of a signaling complex consisting of ARHGEF2, NOD2 and RIPK2. Interacts with ANKRD17 (via N-terminus). Interacts with HSPA1A; the interaction enhances NOD2 stability. Interacts (via both CARD domains) with HSP90; the interaction enhances NOD2 stability. Interacts (via CARD domain) with SOCS3; the interaction promotes NOD2 degradation. Interacts (via CARD domain) with ERBIN; the interaction inhibits activation of NOD2. Interacts with MAPKBP1; the interaction is enhanced in the presence of muramyl dipeptide (MDP) and inhibits NOD2 homooligomerization and activation. Interacts with INAVA; the interaction takes place upon Pattern recognition receptor (PRR) stimulation. Interacts (via NACHT domain) with CARD9. Interacts (via CARD domain) with CASP1; this interaction leads to IL1B processing. Also interacts with CASP4. Interacts with NLRP1; this interaction is enhanced in the presence of muramyl dipeptide (MDP) and leads to increased IL1B release. Interacts with NLRP12; this interaction promotes degradation of NOD2 through the ubiquitin-proteasome pathway. Interacts with ANKHD1, C10orf67, CHMP5, DOCK7, ENTR1, KRT15, LDOC1, PPP1R12C, PPP2R3B, TRIM41 and VIM. Interacts with MAVS; interaction takes place following single-stranded RNA (ssRNA)-binding. Interacts with ATG16L1. Interacts with IRGM; promoting IRGM 'Lys-63'-linked polyubiquitination, which is required for interactions with the core autophagy factors. Palmitoylated by ZDHHC5; palmitoylation is required for proper recruitment to the bacterial entry site and hence for proper signaling upon cognate peptidoglycan detection. Palmitoylation promotes localization to the cell membrane. Palmitoylation protects from SQSTM1/p62-dependent autophagic degradation. Post-translationally, polyubiquitinated by TRIM27, leading to proteasome-mediated degradation. Polyubiquitinated and degraded following muramyl dipeptide (MDP) stimulation, conferring MDP tolerance and preventing septic shock. In terms of processing, degraded via selective autophagy following interaction with IRGM. IRGM promotes NOD2-RIPK2 RIPosome recruitment to autophagosome membranes, promoting their SQSTM1/p62-dependent autophagic degradation. O-glycosylated by OGT, O-GlcNAcylation increases protein stability.

The protein resides in the cell membrane. It is found in the basolateral cell membrane. The protein localises to the cytoplasm. Its subcellular location is the mitochondrion. ADP-binding promotes an inactive closed conformation. In terms of biological role, pattern recognition receptor (PRR) that detects bacterial peptidoglycan fragments and other danger signals and plays an important role in gastrointestinal immunity. Specifically activated by muramyl dipeptide (MDP), a fragment of bacterial peptidoglycan found in every bacterial peptidoglycan type. NOD2 specifically recognizes and binds 6-O-phospho-MDP, the phosphorylated form of MDP, which is generated by NAGK. 6-O-phospho-MDP-binding triggers oligomerization that facilitates the binding and subsequent activation of the proximal adapter receptor-interacting RIPK2. Following recruitment, RIPK2 undergoes 'Met-1'- (linear) and 'Lys-63'-linked polyubiquitination by E3 ubiquitin-protein ligases XIAP, BIRC2, BIRC3 and the LUBAC complex, becoming a scaffolding protein for downstream effectors, triggering activation of the NF-kappa-B and MAP kinases signaling. This in turn leads to the transcriptional activation of hundreds of genes involved in immune response. Its ability to detect bacterial MDP plays a central role in maintaining the equilibrium between intestinal microbiota and host immune responses to control inflammation. An imbalance in this relationship results in dysbiosis, whereby pathogenic bacteria prevail on commensals, causing damage in the intestinal epithelial barrier as well as allowing bacterial invasion and inflammation. Acts as a regulator of appetite by sensing MDP in a subset of brain neurons: microbiota-derived MDP reach the brain, where they bind and activate NOD2 in inhibitory hypothalamic neurons, decreasing neuronal activity, thereby regulating satiety and body temperature. NOD2-dependent MDP-sensing of bacterial cell walls in the intestinal epithelial compartment contributes to sustained postnatal growth upon undernutrition. Also plays a role in antiviral response by acting as a sensor of single-stranded RNA (ssRNA) from viruses: upon ssRNA-binding, interacts with MAVS, leading to activation of interferon regulatory factor-3/IRF3 and expression of type I interferon. Also acts as a regulator of autophagy in dendritic cells via its interaction with ATG16L1, possibly by recruiting ATG16L1 at the site of bacterial entry. NOD2 activation in the small intestine crypt also contributes to intestinal stem cells survival and function: acts by promoting mitophagy via its association with ATG16L1. In addition to its main role in innate immunity, also regulates the adaptive immune system by acting as regulator of helper T-cell and regulatory T-cells (Tregs). Besides recognizing pathogens, also involved in the endoplasmic reticulum stress response: acts by sensing and binding to the cytosolic metabolite sphingosine-1-phosphate generated in response to endoplasmic reticulum stress, initiating an inflammation process that leads to activation of the NF-kappa-B and MAP kinases signaling. May also be involved in NLRP1 activation following activation by MDP, leading to CASP1 activation and IL1B release in macrophages. The polypeptide is Nucleotide-binding oligomerization domain-containing protein 2 (Oryctolagus cuniculus (Rabbit)).